The following is an 81-amino-acid chain: Short neurotoxin 2 (81 aa).

Positions 1–21 are cleaved as a signal peptide; the sequence is MKTLLLTLVVVTIVCLDLGYT. Intrachain disulfides connect Cys-24-Cys-43, Cys-38-Cys-60, Cys-62-Cys-73, and Cys-74-Cys-79.

It belongs to the three-finger toxin family. Short-chain subfamily. Type I alpha-neurotoxin sub-subfamily. In terms of tissue distribution, expressed by the venom gland.

The protein resides in the secreted. Functionally, binds to muscle nicotinic acetylcholine receptor (nAChR) and inhibit acetylcholine from binding to the receptor, thereby impairing neuromuscular transmission. In Tropidechis carinatus (Australian rough-scaled snake), this protein is Short neurotoxin 2.